The following is a 91-amino-acid chain: Small ribosomal subunit protein uS7 (91 aa).

Belongs to the universal ribosomal protein uS7 family. As to quaternary structure, part of the 30S ribosomal subunit. Contacts proteins S9 and S11.

Its function is as follows. One of the primary rRNA binding proteins, it binds directly to 16S rRNA where it nucleates assembly of the head domain of the 30S subunit. Is located at the subunit interface close to the decoding center, probably blocks exit of the E-site tRNA. In Apple proliferation phytoplasma, this protein is Small ribosomal subunit protein uS7 (rpsG).